Consider the following 133-residue polypeptide: Glutaredoxin-C4, chloroplastic (133 aa).

A compositionally biased stretch (low complexity) spans 1–13 (MGMAQSSSSSSRP). The disordered stretch occupies residues 1–25 (MGMAQSSSSSSRPSDSEQLEEPSKP). Residues 1-27 (MGMAQSSSSSSRPSDSEQLEEPSKPVM) constitute a chloroplast transit peptide. In terms of domain architecture, Glutaredoxin spans 29–129 (LDKAKEIVAS…PLLTEAGAIA (101 aa)). The cysteines at positions 49 and 52 are disulfide-linked.

Belongs to the glutaredoxin family. CPYC subfamily.

It localises to the plastid. Its subcellular location is the chloroplast. In terms of biological role, has a glutathione-disulfide oxidoreductase activity in the presence of NADPH and glutathione reductase. Reduces low molecular weight disulfides and proteins. This Oryza sativa subsp. japonica (Rice) protein is Glutaredoxin-C4, chloroplastic (GRXC4).